A 317-amino-acid polypeptide reads, in one-letter code: Metaxin-1 (317 aa).

Residues Lys-38, Lys-41, Lys-78, and Lys-168 each participate in a glycyl lysine isopeptide (Lys-Gly) (interchain with G-Cter in ubiquitin) cross-link. A helical membrane pass occupies residues 272–292; sequence ILSVLAGLAAMVGYALLSGIV.

Belongs to the metaxin family. Interacts with MTX2/metaxin-2. Associates with the mitochondrial contact site and cristae organizing system (MICOS) complex, composed of at least MICOS10/MIC10, CHCHD3/MIC19, CHCHD6/MIC25, APOOL/MIC27, IMMT/MIC60, APOO/MIC23/MIC26 and QIL1/MIC13. This complex was also known under the names MINOS or MitOS complex. The MICOS complex associates with mitochondrial outer membrane proteins SAMM50, MTX1 and MTX2 (together described as components of the mitochondrial outer membrane sorting assembly machinery (SAM) complex) and DNAJC11, mitochondrial inner membrane protein TMEM11 and with HSPA9. The MICOS and SAM complexes together with DNAJC11 are part of a large protein complex spanning both membranes termed the mitochondrial intermembrane space bridging (MIB) complex. Interacts with ARMC1. Post-translationally, ubiquitinated by PRKN during mitophagy, leading to its degradation and enhancement of mitophagy. Deubiquitinated by USP30. Ubiquitous. Higher levels are seen in the kidney as compared to other tissues.

Its subcellular location is the mitochondrion outer membrane. In terms of biological role, involved in transport of proteins into the mitochondrion. Essential for embryonic development. This chain is Metaxin-1 (Mtx1), found in Mus musculus (Mouse).